Here is a 75-residue protein sequence, read N- to C-terminus: Small ribosomal subunit protein bS18 (75 aa).

This sequence belongs to the bacterial ribosomal protein bS18 family. In terms of assembly, part of the 30S ribosomal subunit. Forms a tight heterodimer with protein bS6.

In terms of biological role, binds as a heterodimer with protein bS6 to the central domain of the 16S rRNA, where it helps stabilize the platform of the 30S subunit. This is Small ribosomal subunit protein bS18 from Shewanella loihica (strain ATCC BAA-1088 / PV-4).